The chain runs to 174 residues: Co-chaperone protein HscB (174 aa).

Positions 2–74 constitute a J domain; that stretch reads DYFTLFGLPA…LKRAEYMLSL (73 aa).

It belongs to the HscB family. Interacts with HscA and stimulates its ATPase activity. Interacts with IscU.

Functionally, co-chaperone involved in the maturation of iron-sulfur cluster-containing proteins. Seems to help targeting proteins to be folded toward HscA. The sequence is that of Co-chaperone protein HscB from Yersinia pestis bv. Antiqua (strain Antiqua).